Here is a 126-residue protein sequence, read N- to C-terminus: Fumarate reductase subunit C (126 aa).

3 helical membrane-spanning segments follow: residues 30–50 (IFVAWFVLYLVLVLRAVGAGG), 64–84 (VVVVLNVVALSFLLLHAVTWF), and 105–125 (VLAGHYAAWLVVSVIVAWMVL).

This sequence belongs to the FrdC family. Part of an enzyme complex containing four subunits: a flavoprotein (FrdA), an iron-sulfur protein (FrdB), and two hydrophobic anchor proteins (FrdC and FrdD).

It localises to the cell membrane. In terms of biological role, anchors the catalytic components of the fumarate reductase complex to the cell membrane, binds quinones. This is Fumarate reductase subunit C from Mycobacterium tuberculosis (strain CDC 1551 / Oshkosh).